An 883-amino-acid polypeptide reads, in one-letter code: Alanine--tRNA ligase (883 aa).

His563, His567, Cys677, and His681 together coordinate Zn(2+).

It belongs to the class-II aminoacyl-tRNA synthetase family. It depends on Zn(2+) as a cofactor.

It localises to the cytoplasm. It catalyses the reaction tRNA(Ala) + L-alanine + ATP = L-alanyl-tRNA(Ala) + AMP + diphosphate. Catalyzes the attachment of alanine to tRNA(Ala) in a two-step reaction: alanine is first activated by ATP to form Ala-AMP and then transferred to the acceptor end of tRNA(Ala). Also edits incorrectly charged Ser-tRNA(Ala) and Gly-tRNA(Ala) via its editing domain. This chain is Alanine--tRNA ligase, found in Cereibacter sphaeroides (strain ATCC 17029 / ATH 2.4.9) (Rhodobacter sphaeroides).